The primary structure comprises 477 residues: Beta-agarase D (477 aa).

Residues 1-20 form the signal peptide; the sequence is MKRSILLAIIAFLQFFTSYG. The 357-residue stretch at 22-378 folds into the GH16 domain; that stretch reads YDWDNVPIPA…WIRVYKPVNA (357 aa). Residues 94 to 104, 123 to 125, glutamate 174, glutamate 179, arginine 206, and glutamate 340 each bind substrate; these read MQNHVAVSGGN and NNT. Glutamate 174 acts as the Nucleophile in catalysis. Catalysis depends on glutamate 179, which acts as the Proton donor. Low complexity predominate over residues 382 to 391; sequence NSAETTSTVE. The segment at 382–402 is disordered; the sequence is NSAETTSTVEKPASFEPQGQP.

Belongs to the glycosyl hydrolase 16 family.

Its subcellular location is the secreted. It catalyses the reaction Hydrolysis of (1-&gt;4)-beta-D-galactosidic linkages in agarose, giving the tetramer as the predominant product.. Its function is as follows. Cleaves the beta-1,4-linkages between beta-D-galactose and alpha-L-3,6-anhydro-galactose residues in agarose. Cleaves agarose in a random manner with retention of the anomeric-bond configuration, producing beta-anomers that give rise progressively to alpha-anomers when mutarotation takes place. Requires at least 4 consecutive agarose units and is highly intolerant to modifications. This chain is Beta-agarase D (agaD), found in Zobellia galactanivorans (strain DSM 12802 / CCUG 47099 / CIP 106680 / NCIMB 13871 / Dsij).